Here is a 227-residue protein sequence, read N- to C-terminus: Prolactin-5A1 (227 aa).

A signal peptide spans 1–27 (MQIQPHPSGALLLLLLSNLLMWENVAS). N47 carries N-linked (GlcNAc...) asparagine glycosylation. An intrachain disulfide couples C85 to C204.

Belongs to the somatotropin/prolactin family. In terms of tissue distribution, expressed specifically in placenta. Highly expressed in invasive trophoblast cells lining the central placental vessel.

The protein resides in the secreted. This is Prolactin-5A1 (Prl5a1) from Rattus norvegicus (Rat).